Reading from the N-terminus, the 694-residue chain is Acetyl-coenzyme A synthetase (694 aa).

Positions 1–23 (MSDKRPRSPCSNNNDELNDSSVL) are disordered. The span at 9–23 (PCSNNNDELNDSSVL) shows a compositional bias: polar residues. Residues 229–232 (RGKK) and Thr-347 each bind CoA. ATP contacts are provided by residues 423–425 (GEP), 447–452 (DTYWQT), Asp-536, and Arg-551. Residue Ser-559 participates in CoA binding. Residue Arg-562 coordinates ATP. CoA is bound at residue Arg-628.

The protein belongs to the ATP-dependent AMP-binding enzyme family.

The enzyme catalyses acetate + ATP + CoA = acetyl-CoA + AMP + diphosphate. This chain is Acetyl-coenzyme A synthetase (ACS), found in Cryptosporidium parvum.